Here is a 325-residue protein sequence, read N- to C-terminus: Taste receptor type 2 member 7 (325 aa).

The Extracellular portion of the chain corresponds to 1-9; sequence MADKVQTTL. A helical transmembrane segment spans residues 10–30; the sequence is LFLAVGEFSVGILGNAFIGLV. Over 31 to 55 the chain is Cytoplasmic; sequence NCMDWVKKRKIASIDLILTSLAISR. A helical transmembrane segment spans residues 56 to 76; that stretch reads ICLLCVILLDCFILVLYPDVY. The Extracellular segment spans residues 77-94; it reads ATGKEMRIIDFFWTLTNH. A helical transmembrane segment spans residues 95-115; that stretch reads LSIWFATCLSIYYFFRIANFF. Residues 116–128 lie on the Cytoplasmic side of the membrane; it reads HPLFLWMKWRIDR. The chain crosses the membrane as a helical span at residues 129–149; the sequence is VISWILLGCVVLSVFISLPAT. Topologically, residues 150 to 187 are extracellular; it reads ENLNADFRFCVKAKRKTNLTWSCRVNKTQHASTKLFLN. Residues N167 and N175 are each glycosylated (N-linked (GlcNAc...) asparagine). Residues 188–208 traverse the membrane as a helical segment; sequence LATLLPFCVCLMSFFLLILSL. Residues 209–235 lie on the Cytoplasmic side of the membrane; the sequence is RRHIRRMQLSATGCRDPSTEAHVRALK. Residues 236–256 traverse the membrane as a helical segment; it reads AVISFLLLFIAYYLSFLVATS. Over 257 to 266 the chain is Extracellular; the sequence is SYFMPETELA. The helical transmembrane segment at 267–287 threads the bilayer; the sequence is VIFGESIALIYPSSHSFILIL. Residues 288-319 are Cytoplasmic-facing; sequence GNNKLRHASLKVIWKVMSILKGRKFQQHKQIG.

The protein belongs to the G-protein coupled receptor T2R family.

The protein localises to the membrane. Its function is as follows. Gustducin-coupled receptor implicated in the perception of bitter compounds in the oral cavity and the gastrointestinal tract. Signals through PLCB2 and the calcium-regulated cation channel TRPM5. In Pan paniscus (Pygmy chimpanzee), this protein is Taste receptor type 2 member 7 (TAS2R7).